We begin with the raw amino-acid sequence, 440 residues long: T-box transcription factor T homolog 2 (440 aa).

Residues 44-215 (LWEKFKSLTN…HNPFAKAFLD (172 aa)) constitute a DNA-binding region (T-box). Disordered regions lie at residues 282–303 (APYP…DTAA) and 393–440 (TTAS…MPSM). Residues 409-440 (STDSGYGHSTTPPAPQTRITSNNWSPMTMPSM) show a composition bias toward polar residues.

In terms of tissue distribution, mesoderm and notochord.

The protein resides in the nucleus. Involved in the transcriptional regulation of genes required for mesoderm formation and differentiation. In Branchiostoma floridae (Florida lancelet), this protein is T-box transcription factor T homolog 2.